Here is a 275-residue protein sequence, read N- to C-terminus: Tryptophan synthase alpha chain (275 aa).

Catalysis depends on proton acceptor residues glutamate 51 and glutamate 62.

Belongs to the TrpA family. In terms of assembly, tetramer of two alpha and two beta chains.

It catalyses the reaction (1S,2R)-1-C-(indol-3-yl)glycerol 3-phosphate + L-serine = D-glyceraldehyde 3-phosphate + L-tryptophan + H2O. It participates in amino-acid biosynthesis; L-tryptophan biosynthesis; L-tryptophan from chorismate: step 5/5. The alpha subunit is responsible for the aldol cleavage of indoleglycerol phosphate to indole and glyceraldehyde 3-phosphate. The protein is Tryptophan synthase alpha chain of Caulobacter sp. (strain K31).